The chain runs to 216 residues: Pyridoxine/pyridoxamine 5'-phosphate oxidase (216 aa).

FMN contacts are provided by residues 64 to 69 (RVVLLK), 79 to 80 (FT), Lys85, Lys86, and Gln108. Lys69 is a binding site for substrate. Tyr126, Arg130, and Ser134 together coordinate substrate. FMN contacts are provided by residues 143-144 (QS) and Trp188. 194–196 (RKH) contacts substrate. FMN is bound at residue Arg198.

It belongs to the pyridoxamine 5'-phosphate oxidase family. As to quaternary structure, homodimer. Requires FMN as cofactor.

It catalyses the reaction pyridoxamine 5'-phosphate + O2 + H2O = pyridoxal 5'-phosphate + H2O2 + NH4(+). The enzyme catalyses pyridoxine 5'-phosphate + O2 = pyridoxal 5'-phosphate + H2O2. It participates in cofactor metabolism; pyridoxal 5'-phosphate salvage; pyridoxal 5'-phosphate from pyridoxamine 5'-phosphate: step 1/1. Its pathway is cofactor metabolism; pyridoxal 5'-phosphate salvage; pyridoxal 5'-phosphate from pyridoxine 5'-phosphate: step 1/1. Its function is as follows. Catalyzes the oxidation of either pyridoxine 5'-phosphate (PNP) or pyridoxamine 5'-phosphate (PMP) into pyridoxal 5'-phosphate (PLP). The sequence is that of Pyridoxine/pyridoxamine 5'-phosphate oxidase from Wolbachia pipientis wMel.